The chain runs to 548 residues: LDL receptor repeat-containing protein egg-2 (548 aa).

At 1–49 (MSQQAGNAQRGRFDEEPMSLGEKISHRMDQLKEIVSSSCPCAGKFPPVA) the chain is on the cytoplasmic side. A helical; Signal-anchor for type II membrane protein membrane pass occupies residues 50–70 (IVLIVALIILGVIIAVPLVIF). At 71 to 548 (LSPSAQAMSS…LALKNSGLRP (478 aa)) the chain is on the extracellular side. Asparagine 119 is a glycosylation site (N-linked (GlcNAc...) asparagine). LDL-receptor class A domains follow at residues 122–160 (TCSGFGFACTGSIDMIIPSSKRCDGLKDCSDGSDEENCK), 161–213 (ECQS…ASCR), 215–252 (KCSKDQFKCSGSDACLPISVKCDGVSDCENESDESNCN), 253–288 (KCQKGAHKCGKNCIKASKVCDGIPDCDDGSDEHQCD), 291–328 (TCSGSEKALCEDGTCIMRSQVCDGKHDCLDGIDEENCP), 370–412 (KCDP…KKCT), 416–454 (ECVVESSIQFTCDNKCLESSRRCDGVWDCEDKSDEKGCD), and 455–492 (KCPSRSFKCSADKKCLPFHTRCNGVAECSDGSDEHKCS). 23 cysteine pairs are disulfide-bonded: cysteine 130–cysteine 150, cysteine 144–cysteine 159, cysteine 162–cysteine 190, cysteine 168–cysteine 203, cysteine 197–cysteine 212, cysteine 216–cysteine 229, cysteine 223–cysteine 242, cysteine 236–cysteine 251, cysteine 254–cysteine 265, cysteine 261–cysteine 278, cysteine 272–cysteine 287, cysteine 292–cysteine 305, cysteine 300–cysteine 318, cysteine 312–cysteine 327, cysteine 371–cysteine 389, cysteine 379–cysteine 402, cysteine 396–cysteine 411, cysteine 417–cysteine 431, cysteine 427–cysteine 444, cysteine 438–cysteine 453, cysteine 456–cysteine 469, cysteine 463–cysteine 482, and cysteine 476–cysteine 491. A glycan (N-linked (GlcNAc...) asparagine) is linked at asparagine 244. Asparagine 527 carries an N-linked (GlcNAc...) asparagine glycan.

The protein resides in the cell membrane. It is found in the endosome membrane. Its function is as follows. Probable receptor which is required for the oocyte-to-zygote transition although its exact function is controversial. Redundantly with egg-1, seems to be required for fertilization probably by promoting the interaction or fusion between sperm and oocyte. Conversely, shown to be dispensable for fertilization but required together with egg-1 for the formation of a continuous and cohesive eggshell chitin layer by maintaining a homogenous distribution of chitin synthase chs-1 at the unfertilized oocyte cell membrane. Appears to recruit or maintain together to the unfertilized oocyte cortex several proteins including chs-1, kinase mbk-2 and pseudophosphatase egg-3, and possibly egg-4 and egg-5. The polypeptide is LDL receptor repeat-containing protein egg-2 (Caenorhabditis elegans).